We begin with the raw amino-acid sequence, 335 residues long: Probable G-protein coupled receptor 174 (335 aa).

Residues 1 to 27 are Extracellular-facing; that stretch reads MTDNFTCNKTDGDNTDFRYFIYAVTYT. Residues N4 and N8 are each glycosylated (N-linked (GlcNAc...) asparagine). Residues 28-48 form a helical membrane-spanning segment; that stretch reads VILVPGLIGNILALWVFYGYM. Residues 49 to 53 are Cytoplasmic-facing; sequence KETKR. Residues 54 to 74 traverse the membrane as a helical segment; that stretch reads AVVFMINLAIADLLQILSLPL. The Extracellular segment spans residues 75-91; sequence RIFYYLNHDWPFGPGLC. The cysteines at positions 91 and 168 are disulfide-linked. A helical membrane pass occupies residues 92–112; sequence MFCFYLKYVNMYASIYFLVCI. At 113 to 134 the chain is on the cytoplasmic side; it reads SVRRFWFLMYPFRFNDCKQKYD. The helical transmembrane segment at 135 to 155 threads the bilayer; the sequence is LYISIIGWLIICLACLLFPLL. Topologically, residues 156–182 are extracellular; that stretch reads RTNDDTPGNRTKCFVDLPIRNVNLAQS. A glycan (N-linked (GlcNAc...) asparagine) is linked at N164. Residues 183–203 form a helical membrane-spanning segment; sequence VAMITIGEVVGFVTPLMIVLY. Residues 204-231 lie on the Cytoplasmic side of the membrane; sequence CTWKTALSLQNKYPISQHLGEKKKALKM. A helical membrane pass occupies residues 232-252; the sequence is ILTCAGVFLVCFVPYHFSFPL. Over 253-268 the chain is Extracellular; it reads DFLVKSNEIKSCFARR. Residues 269–289 traverse the membrane as a helical segment; it reads VILIFHSVALCLASLNSCLDP. Residues 290 to 335 are Cytoplasmic-facing; the sequence is VIYYFTTNEFRRRLSRQDLPDNIQLHTKSYKIASNHATSTVAAELC.

The protein belongs to the G-protein coupled receptor 1 family. In terms of assembly, interacts with GNA13. Interacts with CCL21. In terms of tissue distribution, expressed in spleen and, at low levels, in brain. Highly expressed in developing and mature regulatory T-cells.

It is found in the cell membrane. Functionally, G-protein-coupled receptor of lysophosphatidylserine (LysoPS) that plays different roles in immune response. Plays a negative role in regulatory T-cell accumulation and homeostasis. Under inflammatory conditions where LysoPS production increases, contributes to the down-regulation of regulatory T-cell activity to favor effector response. Mediates the suppression of IL-2 production in activated T-lymphocytes leading to inhibition of growth, proliferation and differentiation of T-cells. Mechanistically, acts via G(s)-containing heterotrimeric G proteins to trigger elevated cyclic AMP levels and protein kinase A/PKA activity, which may in turn act to antagonize proximal TCR signaling. Plays an important role in the initial period of sepsis through the regulation of macrophage polarization and pro- and anti-inflammatory cytokine secretions. Upon testosterone treatment, acts as a receptor for CCL21 and subsequently triggers through G(q)-alpha and G(12)/G(13) proteins a calcium flux leading to chemotactic effects on activated B-cells. Signals via GNA13 and PKA to promote CD86 up-regulation by follicular B-cells. The protein is Probable G-protein coupled receptor 174 (Gpr174) of Mus musculus (Mouse).